A 130-amino-acid polypeptide reads, in one-letter code: Large ribosomal subunit protein bL17 (130 aa).

The protein belongs to the bacterial ribosomal protein bL17 family. Part of the 50S ribosomal subunit. Contacts protein L32.

The polypeptide is Large ribosomal subunit protein bL17 (Delftia acidovorans (strain DSM 14801 / SPH-1)).